The primary structure comprises 78 residues: Large ribosomal subunit protein uL29 (78 aa).

The interval 59–78 (VESERKRGKSLSSTQTQKEE) is disordered. Residues 68–78 (SLSSTQTQKEE) are compositionally biased toward polar residues.

The protein belongs to the universal ribosomal protein uL29 family.

The polypeptide is Large ribosomal subunit protein uL29 (Synechococcus sp. (strain JA-3-3Ab) (Cyanobacteria bacterium Yellowstone A-Prime)).